Reading from the N-terminus, the 123-residue chain is MQNKIQVKSVEKRENALIFCAENNEIEVKELSARNHVLVDSDNLSFLYILENESSFIYVSIPHTCWEAMHEAMNNDIVMFVRVNDVEMELENLKEEVEYLVENIEGNANYGEELVTAVEKVFL.

The protein belongs to the UPF0738 family.

This Bacillus cereus (strain G9842) protein is UPF0738 protein BCG9842_B4089.